The chain runs to 489 residues: MQVKILDTTLRDGEQTPGVSLSVEQKVMIAEALDNLGVDIIEAGTAIASEGDFQAIKEISQRGLNAEICSFARIKREDIDAAADAGAESIFMVAPSSDIHINAKFPGKDRDYVIEKSVEAIEYAKERGLIVEFGAEDASRADLDFVIQLFKRAEEAKADRITFADTVGVLSPEKMEEIVRKIKAKVKLPLAIHCHDDFGLATANTIFGIKAGAEEFHGTINGLGERAGNAAIEEVVIALEYLYGIKTKIKKERLYNTSKLVEKLSRVVVPPNKPIVGDNAFTHESGIHTSALFRDAKSYEPISPEVVGRKRVIVLGKHAGRASVEAIMNELGYKATPEQMKEILARIKEIGDKGKRVTDADVRTIIETVLQIKREKKVKLEDLAIFSGKNVMPMASVKLKIDGQERIEAAVGLGPVDAAINAIRRAIKEFADIKLVSYHVDAITGGTDALVDVVVQLKKDNKIVTARGARTDIIMASVEAFIEGINMLF.

A Pyruvate carboxyltransferase domain is found at 3 to 255; it reads VKILDTTLRD…KTKIKKERLY (253 aa).

Belongs to the alpha-IPM synthase/homocitrate synthase family. As to quaternary structure, homodimer.

It carries out the reaction pyruvate + acetyl-CoA + H2O = (3R)-citramalate + CoA + H(+). The protein operates within amino-acid biosynthesis; L-isoleucine biosynthesis; 2-oxobutanoate from pyruvate: step 1/3. Its function is as follows. Catalyzes the condensation of pyruvate and acetyl-coenzyme A to form (R)-citramalate. This Archaeoglobus fulgidus (strain ATCC 49558 / DSM 4304 / JCM 9628 / NBRC 100126 / VC-16) protein is Putative (R)-citramalate synthase CimA (cimA).